A 79-amino-acid polypeptide reads, in one-letter code: Sec-independent protein translocase protein TatA (79 aa).

A helical membrane pass occupies residues 1-21; the sequence is MGGISIWQLLIIALIVILLFG. The disordered stretch occupies residues 42 to 79; the sequence is AMTSETSEEEKKALEDSQTAQTSQQAEKKPESKDKEQA. Residues 57–66 are compositionally biased toward polar residues; sequence DSQTAQTSQQ. The segment covering 67 to 79 has biased composition (basic and acidic residues); sequence AEKKPESKDKEQA.

It belongs to the TatA/E family. As to quaternary structure, the Tat system comprises two distinct complexes: a TatABC complex, containing multiple copies of TatA, TatB and TatC subunits, and a separate TatA complex, containing only TatA subunits. Substrates initially bind to the TatABC complex, which probably triggers association of the separate TatA complex to form the active translocon.

The protein resides in the cell inner membrane. Part of the twin-arginine translocation (Tat) system that transports large folded proteins containing a characteristic twin-arginine motif in their signal peptide across membranes. TatA could form the protein-conducting channel of the Tat system. In Shewanella denitrificans (strain OS217 / ATCC BAA-1090 / DSM 15013), this protein is Sec-independent protein translocase protein TatA.